A 117-amino-acid polypeptide reads, in one-letter code: Fluoride-specific ion channel FluC 2 (117 aa).

The next 2 membrane-spanning stretches (helical) occupy residues 1-21 (MISI…RSAI) and 46-66 (FLIG…AFFV). Residues glycine 71 and threonine 74 each contribute to the Na(+) site. Residues 95-115 (LFLNYSLLQFIIGFIACYIGY) form a helical membrane-spanning segment.

The protein belongs to the fluoride channel Fluc/FEX (TC 1.A.43) family.

The protein localises to the cell membrane. The enzyme catalyses fluoride(in) = fluoride(out). Na(+) is not transported, but it plays an essential structural role and its presence is essential for fluoride channel function. Fluoride-specific ion channel. Important for reducing fluoride concentration in the cell, thus reducing its toxicity. The chain is Fluoride-specific ion channel FluC 2 from Staphylococcus aureus (strain MSSA476).